Here is a 692-residue protein sequence, read N- to C-terminus: Phenoloxidase subunit 2 (692 aa).

The propeptide occupies 1–97 (MTDRVKSLQL…PRHQEMATEV (97 aa)). Residues H213, H217, and H243 each contribute to the Cu cation site. N-linked (GlcNAc...) asparagine glycans are attached at residues N256, N295, and N309. The active-site Proton acceptor is the E351. Positions 366, 370, and 406 each coordinate Cu cation. A glycan (N-linked (GlcNAc...) asparagine) is linked at N494. Intrachain disulfides connect C583–C628 and C585–C635.

This sequence belongs to the tyrosinase family. In terms of assembly, heterodimer. Cu(2+) serves as cofactor.

The protein localises to the secreted. It catalyses the reaction L-tyrosine + O2 = L-dopaquinone + H2O. The catalysed reaction is 2 L-dopa + O2 = 2 L-dopaquinone + 2 H2O. Copper-containing oxidase that functions in the formation of pigments such as melanins and other polyphenolic compounds. Catalyzes the rate-limiting conversions of tyrosine to DOPA, DOPA to DOPA-quinone and possibly 5,6 dihydroxyindole to indole-5'6 quinone. Binds to the surface of hemocytes and is involved in hemocyte melanization. Binds the A.niger cell wall component alpha-1,3-glucan, a fungal pathogen-associated molecular pattern (PAMP) that activates the host immune response. The polypeptide is Phenoloxidase subunit 2 (Galleria mellonella (Greater wax moth)).